A 220-amino-acid chain; its full sequence is MELYLDTANVAEVERLARIFPIAGVTTNPSIVAASKESIWDVLPRLQNAIGEEGTLFAQTMSRDAKGMVEEAKRLNNAIPGIVVKIPVTAEGLAAIKLLKKEDIVTLGTAVYSASQGLLAALAGAKYVAPYVNRVDAQGGDGIRMVQELQTLLEHHAPDSMVLAASFKTPRQALDCLLAGCQAITLPLDVAQQMLNTPAVESAIEKFEQDWKNAFGNLNL.

Residue K85 is the Schiff-base intermediate with substrate of the active site.

Belongs to the transaldolase family. Type 3A subfamily. Homodecamer.

Its subcellular location is the cytoplasm. It catalyses the reaction beta-D-fructose 6-phosphate = dihydroxyacetone + D-glyceraldehyde 3-phosphate. In terms of biological role, catalyzes the reversible formation of fructose 6-phosphate from dihydroxyacetone and D-glyceraldehyde 3-phosphate via an aldolization reaction. This Salmonella agona (strain SL483) protein is Fructose-6-phosphate aldolase.